Reading from the N-terminus, the 132-residue chain is MAKDILGEAGLHFDELNKLRVLDPEVTQQTVELKEECKDFVDKIGQFQKIVGGLIELVDQLAKEAENEKMKAIGARNLLKSIAKQREAQQQQLQALIAEKKTQLERYRVEYEALCKVEAEQNEFIDQFIFQK.

The IFT57-binding stretch occupies residues 70–132 (MKAIGARNLL…EFIDQFIFQK (63 aa)). The stretch at 74–116 (GARNLLKSIAKQREAQQQQLQALIAEKKTQLERYRVEYEALCK) forms a coiled coil.

In terms of assembly, component of the IFT complex B, at least composed of IFT20, IFT22, IFT25, IFT27, IFT46, IFT52, TRAF3IP1/IFT54, IFT57, IFT74, IFT80, IFT81, and IFT88. Interacts directly with IFT57 and KIF3B/Kinesin II subunit. Interacts with IFT88. Interacts with CEP83. Interacts with SPEF2 (via C-terminus). Interacts with CBL and CBLB. Interacts with TRIP11. Interacts with TTC21A. Interacts with SPATA1. Interacts with USH1G. Interacts with CCDC146. Interacts with CEP78; regulating IFT20 stability and localization. As to expression, expressed predominantly in the testis (at protein level). Expressed in kidney and retina. Expression is up-regulated during spermiogenesis.

The protein resides in the golgi apparatus. Its subcellular location is the cis-Golgi network. The protein localises to the cytoplasm. It is found in the cytoskeleton. It localises to the microtubule organizing center. The protein resides in the centrosome. Its subcellular location is the centriole. The protein localises to the cilium basal body. It is found in the cell projection. It localises to the cilium. The protein resides in the cytoplasmic vesicle. Its subcellular location is the secretory vesicle. The protein localises to the acrosome. Its function is as follows. Part of intraflagellar transport (IFT) particles involved in ciliary process assembly. May play a role in the trafficking of ciliary membrane proteins from the Golgi complex to the cilium. Regulates the ciliary platelet-derived growth factor receptor-alpha (PDGFRA) signaling pathway. Required for protein stability of E3 ubiquitin ligases CBL and CBLB that mediate ubiquitination and internalization of PDGFRA for proper feedback inhibition of PDGFRA signaling. Essential for male fertility. Plays an important role in spermatogenesis, particularly spermiogenesis, when germ cells form flagella. May play a role in the transport of flagellar proteins ODF2 and SPAG16 to build sperm flagella and in the removal of redundant sperm cytoplasm. Also involved in autophagy since it is required for trafficking of ATG16L and the expansion of the autophagic compartment. In Mus musculus (Mouse), this protein is Intraflagellar transport protein 20 homolog (Ift20).